The primary structure comprises 263 residues: ABC transporter I family member 17 (263 aa).

One can recognise an ABC transporter domain in the interval 29-260 (IRVHDLTRVA…THPMAQRFLQ (232 aa)). 62-69 (GPSGSGKS) serves as a coordination point for ATP.

This sequence belongs to the ABC transporter superfamily. ABCI family.

The protein is ABC transporter I family member 17 (ABCI17) of Arabidopsis thaliana (Mouse-ear cress).